The chain runs to 507 residues: Type II methyltransferase M.PstI (507 aa).

This sequence belongs to the N(4)/N(6)-methyltransferase family. In terms of assembly, monomer.

The enzyme catalyses a 2'-deoxyadenosine in DNA + S-adenosyl-L-methionine = an N(6)-methyl-2'-deoxyadenosine in DNA + S-adenosyl-L-homocysteine + H(+). Its function is as follows. A gamma subtype methylase that recognizes the double-stranded sequence 5'-CTGCAG-3', methylates A-5 on both strands, and protects the DNA from cleavage by the PstI endonuclease. This is Type II methyltransferase M.PstI (pstIM) from Providencia stuartii.